The primary structure comprises 202 residues: IMP cyclohydrolase (202 aa).

The tract at residues 29 to 52 is disordered; it reads VQRDGTVTVEPTPDAPETDNPYIS.

The protein belongs to the archaeal IMP cyclohydrolase family.

The enzyme catalyses IMP + H2O = 5-formamido-1-(5-phospho-D-ribosyl)imidazole-4-carboxamide. It participates in purine metabolism; IMP biosynthesis via de novo pathway; IMP from 5-formamido-1-(5-phospho-D-ribosyl)imidazole-4-carboxamide: step 1/1. In terms of biological role, catalyzes the cyclization of 5-formylamidoimidazole-4-carboxamide ribonucleotide to IMP. The chain is IMP cyclohydrolase from Haloarcula marismortui (strain ATCC 43049 / DSM 3752 / JCM 8966 / VKM B-1809) (Halobacterium marismortui).